We begin with the raw amino-acid sequence, 383 residues long: 1-deoxy-D-xylulose 5-phosphate reductoisomerase (383 aa).

The NADPH site is built by Thr-10, Gly-11, Ser-12, Ile-13, Asn-38, and Asn-121. Lys-122 contributes to the 1-deoxy-D-xylulose 5-phosphate binding site. Glu-123 serves as a coordination point for NADPH. Asp-147 is a Mn(2+) binding site. The 1-deoxy-D-xylulose 5-phosphate site is built by Ser-148, Glu-149, Ser-172, and His-195. Residue Glu-149 coordinates Mn(2+). Gly-201 lines the NADPH pocket. 1-deoxy-D-xylulose 5-phosphate is bound by residues Ser-208, Asn-213, Lys-214, and Glu-217. Position 217 (Glu-217) interacts with Mn(2+).

It belongs to the DXR family. Requires Mg(2+) as cofactor. The cofactor is Mn(2+).

The enzyme catalyses 2-C-methyl-D-erythritol 4-phosphate + NADP(+) = 1-deoxy-D-xylulose 5-phosphate + NADPH + H(+). The protein operates within isoprenoid biosynthesis; isopentenyl diphosphate biosynthesis via DXP pathway; isopentenyl diphosphate from 1-deoxy-D-xylulose 5-phosphate: step 1/6. Functionally, catalyzes the NADPH-dependent rearrangement and reduction of 1-deoxy-D-xylulose-5-phosphate (DXP) to 2-C-methyl-D-erythritol 4-phosphate (MEP). This Vesicomyosocius okutanii subsp. Calyptogena okutanii (strain HA) protein is 1-deoxy-D-xylulose 5-phosphate reductoisomerase.